Reading from the N-terminus, the 223-residue chain is Translation initiation factor 6 (223 aa).

The protein belongs to the eIF-6 family.

Its function is as follows. Binds to the 50S ribosomal subunit and prevents its association with the 30S ribosomal subunit to form the 70S initiation complex. This is Translation initiation factor 6 from Saccharolobus islandicus (strain Y.N.15.51 / Yellowstone #2) (Sulfolobus islandicus).